A 497-amino-acid chain; its full sequence is 4,4'-diaponeurosporene oxygenase (497 aa).

Position 7-19 (7-19) interacts with FAD; that stretch reads VIGGGLGGISAAI.

This sequence belongs to the carotenoid/retinoid oxidoreductase family. CrtP subfamily. Requires FAD as cofactor.

It carries out the reaction all-trans-4,4'-diaponeurosporene + 2 AH2 + 2 O2 = 4,4'-diaponeurosporenal + 2 A + 3 H2O. It participates in carotenoid biosynthesis; staphyloxanthin biosynthesis; staphyloxanthin from farnesyl diphosphate: step 3/5. Functionally, involved in the biosynthesis of the yellow-orange carotenoid staphyloxanthin, which plays a role in the virulence via its protective function against oxidative stress. Catalyzes the oxidation of the terminal methyl side group of 4,4'-diaponeurosporene to form 4,4'-diaponeurosporen-4-al. The protein is 4,4'-diaponeurosporene oxygenase of Staphylococcus aureus (strain MSSA476).